Reading from the N-terminus, the 407-residue chain is uncharacterized protein (407 aa).

Positions 145–231 (EANRFGRSNS…DPLTSITSDT (87 aa)) are disordered. Basic residues predominate over residues 158 to 175 (SNSRSKSSRSRSNNRSKS). The span at 176-196 (SRSSSTQSKSNNRSNSRSNSK) shows a compositional bias: low complexity. One can recognise an N-acetyltransferase domain in the interval 271–407 (IVFETLDQND…NHKIHMEKDI (137 aa)).

Its subcellular location is the virion. This is an uncharacterized protein from Acanthamoeba polyphaga (Amoeba).